The following is a 159-amino-acid chain: Small ribosomal subunit protein uS15 (159 aa).

The segment covering 1–16 (MNKRKEKGKSHSKRPV) has biased composition (basic residues). The interval 1-22 (MNKRKEKGKSHSKRPVRNTPPR) is disordered.

It belongs to the universal ribosomal protein uS15 family. Part of the 30S ribosomal subunit.

The sequence is that of Small ribosomal subunit protein uS15 from Ignicoccus hospitalis (strain KIN4/I / DSM 18386 / JCM 14125).